A 337-amino-acid polypeptide reads, in one-letter code: Probable dual-specificity RNA methyltransferase RlmN (337 aa).

The Proton acceptor role is filled by E88. Positions 94-324 (SEKRLTVCVS…VRYSRGLATD (231 aa)) constitute a Radical SAM core domain. An intrachain disulfide couples C101 to C327. Positions 108, 112, and 115 each coordinate [4Fe-4S] cluster. S-adenosyl-L-methionine contacts are provided by residues 155–156 (GE), S185, 208–210 (SLH), and N284. The active-site S-methylcysteine intermediate is C327.

Belongs to the radical SAM superfamily. RlmN family. It depends on [4Fe-4S] cluster as a cofactor.

It is found in the cytoplasm. It carries out the reaction adenosine(2503) in 23S rRNA + 2 reduced [2Fe-2S]-[ferredoxin] + 2 S-adenosyl-L-methionine = 2-methyladenosine(2503) in 23S rRNA + 5'-deoxyadenosine + L-methionine + 2 oxidized [2Fe-2S]-[ferredoxin] + S-adenosyl-L-homocysteine. The catalysed reaction is adenosine(37) in tRNA + 2 reduced [2Fe-2S]-[ferredoxin] + 2 S-adenosyl-L-methionine = 2-methyladenosine(37) in tRNA + 5'-deoxyadenosine + L-methionine + 2 oxidized [2Fe-2S]-[ferredoxin] + S-adenosyl-L-homocysteine. Functionally, specifically methylates position 2 of adenine 2503 in 23S rRNA and position 2 of adenine 37 in tRNAs. This Microcystis aeruginosa (strain NIES-843 / IAM M-2473) protein is Probable dual-specificity RNA methyltransferase RlmN.